A 351-amino-acid polypeptide reads, in one-letter code: MRKIIHVDMDCFFAAVEMRDNPALRDIPIAIGGSRERRGVISTANYPARKFGVRSAMPTGMALKLCPHLTLLPGRFDAYKEASNHIREIFSRYTSRIEPLSLDEAYLDVTDSVHCHGSATLIAQEIRQTIFNELQLTASAGVAPVKFLAKIASDMNKPNGQFVITPAEVPAFLQTLPLEKIPGVGKVSAAKLEAMGLRTCGDVQKCDLVILLKRFGKFGRILWERSQGIDERDVNSERLRKSVGVERTMAEDIHHWSECEAIIERLYPELERRLAKVKPDLLIARQGVKLKFDDFQQTTQEHVWPRLNKADLIATARKTWDERRGGRGVRLVGLHVTLLDPQMERQLVLGL.

The region spanning Ile-4 to Gly-185 is the UmuC domain. The Mg(2+) site is built by Asp-8 and Asp-103. Glu-104 is a catalytic residue.

Belongs to the DNA polymerase type-Y family. Monomer. It depends on Mg(2+) as a cofactor.

It is found in the cytoplasm. It carries out the reaction DNA(n) + a 2'-deoxyribonucleoside 5'-triphosphate = DNA(n+1) + diphosphate. In terms of biological role, poorly processive, error-prone DNA polymerase involved in untargeted mutagenesis. Copies undamaged DNA at stalled replication forks, which arise in vivo from mismatched or misaligned primer ends. These misaligned primers can be extended by PolIV. Exhibits no 3'-5' exonuclease (proofreading) activity. May be involved in translesional synthesis, in conjunction with the beta clamp from PolIII. The chain is DNA polymerase IV from Shigella flexneri.